Here is a 392-residue protein sequence, read N- to C-terminus: Phosphopentomutase (392 aa).

Residues aspartate 10, aspartate 282, histidine 287, aspartate 323, histidine 324, and histidine 335 each contribute to the Mn(2+) site.

Belongs to the phosphopentomutase family. Requires Mn(2+) as cofactor.

The protein resides in the cytoplasm. The enzyme catalyses 2-deoxy-alpha-D-ribose 1-phosphate = 2-deoxy-D-ribose 5-phosphate. It catalyses the reaction alpha-D-ribose 1-phosphate = D-ribose 5-phosphate. Its pathway is carbohydrate degradation; 2-deoxy-D-ribose 1-phosphate degradation; D-glyceraldehyde 3-phosphate and acetaldehyde from 2-deoxy-alpha-D-ribose 1-phosphate: step 1/2. In terms of biological role, isomerase that catalyzes the conversion of deoxy-ribose 1-phosphate (dRib-1-P) and ribose 1-phosphate (Rib-1-P) to deoxy-ribose 5-phosphate (dRib-5-P) and ribose 5-phosphate (Rib-5-P), respectively. The protein is Phosphopentomutase of Dictyoglomus thermophilum (strain ATCC 35947 / DSM 3960 / H-6-12).